The primary structure comprises 340 residues: Dihydroorotate dehydrogenase (quinone) (340 aa).

Residues 67-71 (AGFDK) and Thr91 each bind FMN. Lys71 serves as a coordination point for substrate. Residue 116–120 (NRMGF) coordinates substrate. 2 residues coordinate FMN: Asn143 and Asn176. Position 176 (Asn176) interacts with substrate. Ser179 acts as the Nucleophile in catalysis. Asn181 contributes to the substrate binding site. Residues Lys217 and Thr245 each coordinate FMN. 246 to 247 (NT) is a substrate binding site. Residues Gly267, Gly296, and 317-318 (YT) contribute to the FMN site.

The protein belongs to the dihydroorotate dehydrogenase family. Type 2 subfamily. In terms of assembly, monomer. FMN is required as a cofactor.

The protein localises to the cell membrane. The catalysed reaction is (S)-dihydroorotate + a quinone = orotate + a quinol. Its pathway is pyrimidine metabolism; UMP biosynthesis via de novo pathway; orotate from (S)-dihydroorotate (quinone route): step 1/1. Functionally, catalyzes the conversion of dihydroorotate to orotate with quinone as electron acceptor. The polypeptide is Dihydroorotate dehydrogenase (quinone) (Christiangramia forsetii (strain DSM 17595 / CGMCC 1.15422 / KT0803) (Gramella forsetii)).